We begin with the raw amino-acid sequence, 291 residues long: MTDSFPFSVQESVPLSRFSTFRIGGPARYFKELTSVSEALTVFSYLHTHPLPYIIIGKGSNCLFDDQGFDGLVLYNNIQGQEFLSDTQIKVLSGSSFALLGKRLSSQGFSGLEFAVGIPGTVGGAVFMNAGTTLANTASSLINVEIIDHSGILLSIPREKLLFSYRTSPFQKKPAFIASATFQLTKDPQAAKRAKALIEERILKQPYEYPSAGCIFRNPEGLSAGALIDRAGLKGLKIGGGQISEKHGNFIINTGNACTADILELIEIIQKTLKKQGISLHKEVRIIPFRL.

The FAD-binding PCMH-type domain maps to 22–187; the sequence is RIGGPARYFK…ASATFQLTKD (166 aa). Arg166 is an active-site residue. Cys214 serves as the catalytic Proton donor. Glu283 is an active-site residue.

This sequence belongs to the MurB family. Requires FAD as cofactor.

It localises to the cytoplasm. The enzyme catalyses UDP-N-acetyl-alpha-D-muramate + NADP(+) = UDP-N-acetyl-3-O-(1-carboxyvinyl)-alpha-D-glucosamine + NADPH + H(+). It functions in the pathway cell wall biogenesis; peptidoglycan biosynthesis. Functionally, cell wall formation. The chain is UDP-N-acetylenolpyruvoylglucosamine reductase from Chlamydia trachomatis serovar A (strain ATCC VR-571B / DSM 19440 / HAR-13).